Reading from the N-terminus, the 61-residue chain is Metallothionein-2 (61 aa).

An N-acetylmethionine modification is found at Met1. The segment at 1–29 (MDPNCSCATDGSCSCSGSCKCKECKCTTC) is beta. 18 residues coordinate a divalent metal cation: Cys5, Cys7, Cys13, Cys15, Cys19, Cys21, Cys24, Cys26, Cys29, Cys33, Cys34, Cys36, Cys37, Cys41, Cys44, Cys48, Cys50, and Cys57. An alpha region spans residues 30–61 (KKSCCSCCPVGCAKCSQGCVCKEASEKCSCCA). At Ser58 the chain carries Phosphoserine. Cys59 and Cys60 together coordinate a divalent metal cation.

It belongs to the metallothionein superfamily. Type 1 family.

Functionally, metallothioneins have a high content of cysteine residues that bind various heavy metals; these proteins are transcriptionally regulated by both heavy metals and glucocorticoids. This is Metallothionein-2 (MT2) from Mesocricetus auratus (Golden hamster).